The chain runs to 354 residues: Opsin-5 (354 aa).

The Extracellular portion of the chain corresponds to 1–33 (MALNHTALPQDERLPHYLRDGDPFASKLSWEAD). N-linked (GlcNAc...) asparagine glycosylation occurs at Asn-4. A helical transmembrane segment spans residues 34–54 (LVAGFYLTIIGILSTFGNGYV). The Cytoplasmic portion of the chain corresponds to 55 to 74 (LYMSSRRKKKLRPAEIMTIN). Residues 75–95 (LAVCDLGISVVGKPFTIISCF) traverse the membrane as a helical segment. The Extracellular portion of the chain corresponds to 96 to 108 (CHRWVFGWIGCRW). A disulfide bridge links Cys-106 with Cys-183. Residues 109–129 (YGWAGFFFGCGSLITMTAVSL) traverse the membrane as a helical segment. Topologically, residues 130–150 (DRYLKICYLSYGVWLKRKHAY) are cytoplasmic. The helical transmembrane segment at 151-171 (ICLAAIWAYASFWTTMPLVGL) threads the bilayer. Residues 172 to 197 (GDYVPEPFGTSCTLDWWLAQASVGGQ) are Extracellular-facing. A helical transmembrane segment spans residues 198 to 218 (VFILNILFFCLLLPTAVIVFS). Topologically, residues 219 to 252 (YVKIIAKVKSSSKEVAHFDSRIHSSHVLEMKLTK) are cytoplasmic. A helical transmembrane segment spans residues 253 to 273 (VAMLICAGFLIAWIPYAVVSV). Residues 274 to 288 (WSAFGRPDSIPIQLS) are Extracellular-facing. A helical transmembrane segment spans residues 289 to 309 (VVPTLLAKSAAMYNPIIYQVI). An N6-(retinylidene)lysine modification is found at Lys-296. Over 310–353 (DYKFACCQTGGLKATKKKSLEGFRLHTVTTVRKSSAVLEIHEEW) the chain is Cytoplasmic. 2 S-palmitoyl cysteine lipidation sites follow: Cys-315 and Cys-316.

The protein belongs to the G-protein coupled receptor 1 family. Opsin subfamily. Post-translationally, it is uncertain whether Cys-315 or Cys-316 is palmitoylated. In terms of tissue distribution, detected in brain and retina and cell lines derived from neural retina.

It localises to the cell membrane. G-protein coupled receptor which selectively activates G(i) type G proteins via ultraviolet A (UVA) light-mediated activation in the retina. Preferentially binds the chromophore 11-cis retinal and is a bistable protein that displays emission peaks at 380 nm (UVA light) and 470 nm (blue light). Required for the light-response in the inner plexiform layer, and contributes to the regulation of the light-response in the nerve fiber layer, via phosphorylated DAT/SLC6A3 dopamine uptake. Involved in local corneal and retinal circadian rhythm photoentrainment via modulation of the UVA light-induced phase-shift of the retina clock. Acts as a circadian photoreceptor in the outer ear, via modulation of circadian clock-gene expression in response to violet light during the light-to-dark transition phase and night phase of the circadian cycle. Required in the retina to negatively regulate hyaloid vessel regression during postnatal development via light-dependent OPN5-SLC32A1-DRD2-VEGFR2 signaling. Involved in the light-dependent regulation of retina and vitreous compartment dopamine levels. This chain is Opsin-5 (OPN5), found in Homo sapiens (Human).